The following is a 190-amino-acid chain: Xanthine phosphoribosyltransferase (190 aa).

Xanthine-binding residues include Leu-20 and Asn-27. 129-133 provides a ligand contact to 5-phospho-alpha-D-ribose 1-diphosphate; that stretch reads ASGSA. A xanthine-binding site is contributed by Lys-157.

The protein belongs to the purine/pyrimidine phosphoribosyltransferase family. Xpt subfamily. As to quaternary structure, homodimer.

The protein localises to the cytoplasm. The catalysed reaction is XMP + diphosphate = xanthine + 5-phospho-alpha-D-ribose 1-diphosphate. The protein operates within purine metabolism; XMP biosynthesis via salvage pathway; XMP from xanthine: step 1/1. In terms of biological role, converts the preformed base xanthine, a product of nucleic acid breakdown, to xanthosine 5'-monophosphate (XMP), so it can be reused for RNA or DNA synthesis. The polypeptide is Xanthine phosphoribosyltransferase (Clostridium tetani (strain Massachusetts / E88)).